The primary structure comprises 222 residues: Kinetochore protein Spc25 (222 aa).

A coiled-coil region spans residues 51–86 (RHQRKVGKLQKVLMERREELDKRVSFIEELDRELEA).

This sequence belongs to the SPC25 family. As to quaternary structure, component of the Ndc80 complex, which is composed of Ndc80, Nuf2 and Spc25.

The protein localises to the nucleus. It localises to the chromosome. The protein resides in the centromere. Its subcellular location is the kinetochore. Its function is as follows. Acts as a component of the essential kinetochore-associated Ndc80 complex, which is required for chromosome segregation and spindle checkpoint activity during meiosis and mitosis. Required for kinetochore integrity and the organization of stable microtubule binding sites in the outer plate of the kinetochore. Participates in SAC signaling that responds specifically to disruptions in spindle microtubule dynamics. The NDC80 complex synergistically enhances the affinity of the SKA1 complex for microtubules and may allow the NDC80 complex to track depolymerizing microtubules. This chain is Kinetochore protein Spc25, found in Drosophila melanogaster (Fruit fly).